The primary structure comprises 260 residues: Ribonuclease 3 (260 aa).

Residues 1 to 24 (MAQSSKYQRKPRSGERKRSQRRLE) are disordered. The segment covering 12–24 (RSGERKRSQRRLE) has biased composition (basic and acidic residues). Positions 33–162 (FDDLLVRTGL…FIGALYMDQG (130 aa)) constitute an RNase III domain. Mg(2+) is bound at residue Glu-75. The active site involves Asp-79. Residues Asp-148 and Glu-151 each coordinate Mg(2+). Glu-151 is a catalytic residue. The 70-residue stretch at 188–257 (DFKSQLQEFV…AKQALLALNQ (70 aa)) folds into the DRBM domain.

It belongs to the ribonuclease III family. In terms of assembly, homodimer. Mg(2+) is required as a cofactor.

It is found in the cytoplasm. It catalyses the reaction Endonucleolytic cleavage to 5'-phosphomonoester.. Digests double-stranded RNA. Involved in the processing of primary rRNA transcript to yield the immediate precursors to the large and small rRNAs (23S and 16S). Processes some mRNAs, and tRNAs when they are encoded in the rRNA operon. Processes pre-crRNA and tracrRNA of type II CRISPR loci if present in the organism. The protein is Ribonuclease 3 of Shouchella clausii (strain KSM-K16) (Alkalihalobacillus clausii).